The primary structure comprises 243 residues: Adenylate dimethylallyltransferase (243 aa).

Belongs to the isopentenyl transferase family.

The enzyme catalyses dimethylallyl diphosphate + AMP = N(6)-(dimethylallyl)adenosine 5'-phosphate + diphosphate. Its function is as follows. Transfers dimethylallyl groups to AMP as part of the biosynthesis of cytokinin phytohormones. In Rhizobium rhizogenes (Agrobacterium rhizogenes), this protein is Adenylate dimethylallyltransferase (tzs).